The following is a 358-amino-acid chain: Nicotinate-nucleotide--dimethylbenzimidazole phosphoribosyltransferase (358 aa).

Glu313 functions as the Proton acceptor in the catalytic mechanism.

It belongs to the CobT family.

It catalyses the reaction 5,6-dimethylbenzimidazole + nicotinate beta-D-ribonucleotide = alpha-ribazole 5'-phosphate + nicotinate + H(+). Its pathway is nucleoside biosynthesis; alpha-ribazole biosynthesis; alpha-ribazole from 5,6-dimethylbenzimidazole: step 1/2. Functionally, catalyzes the synthesis of alpha-ribazole-5'-phosphate from nicotinate mononucleotide (NAMN) and 5,6-dimethylbenzimidazole (DMB). The chain is Nicotinate-nucleotide--dimethylbenzimidazole phosphoribosyltransferase from Corynebacterium glutamicum (strain R).